The sequence spans 95 residues: Aspartyl/glutamyl-tRNA(Asn/Gln) amidotransferase subunit C (95 aa).

This sequence belongs to the GatC family. Heterotrimer of A, B and C subunits.

The catalysed reaction is L-glutamyl-tRNA(Gln) + L-glutamine + ATP + H2O = L-glutaminyl-tRNA(Gln) + L-glutamate + ADP + phosphate + H(+). It carries out the reaction L-aspartyl-tRNA(Asn) + L-glutamine + ATP + H2O = L-asparaginyl-tRNA(Asn) + L-glutamate + ADP + phosphate + 2 H(+). In terms of biological role, allows the formation of correctly charged Asn-tRNA(Asn) or Gln-tRNA(Gln) through the transamidation of misacylated Asp-tRNA(Asn) or Glu-tRNA(Gln) in organisms which lack either or both of asparaginyl-tRNA or glutaminyl-tRNA synthetases. The reaction takes place in the presence of glutamine and ATP through an activated phospho-Asp-tRNA(Asn) or phospho-Glu-tRNA(Gln). The sequence is that of Aspartyl/glutamyl-tRNA(Asn/Gln) amidotransferase subunit C from Citrifermentans bemidjiense (strain ATCC BAA-1014 / DSM 16622 / JCM 12645 / Bem) (Geobacter bemidjiensis).